An 801-amino-acid polypeptide reads, in one-letter code: Squamosa promoter-binding-like protein 7 (801 aa).

Disordered stretches follow at residues Met-1 to Asp-23 and Ser-59 to Arg-91. The segment at Val-135–Lys-212 adopts an SBP-type; atypical zinc-finger fold. Cys-138, Cys-143, Cys-160, Cys-163, Cys-179, Cys-182, His-186, and Cys-198 together coordinate Zn(2+). Residues Lys-195–Arg-211 carry the Bipartite nuclear localization signal motif. Positions Glu-203–Pro-213 are enriched in basic residues. Disordered regions lie at residues Glu-203–Ile-258 and Gly-286–Ala-313. Residues Glu-222–Ser-233 are compositionally biased toward polar residues. Residues Gln-249–Ile-258 show a composition bias toward basic and acidic residues. The span at Ser-304–Ala-313 shows a compositional bias: polar residues.

As to quaternary structure, homodimer. Interacts with KIN17. Interacts with HY5. Zn(2+) is required as a cofactor. In terms of tissue distribution, expressed in roots rosette leaves, cauline leaves, stems, flowers and siliques.

The protein resides in the nucleus speckle. Its function is as follows. Transcription factor that participates in reprogramming global gene expression during copper deficiency in order to improve the metal uptake and prioritize its distribution to copper proteins of major importance. Binds directly to 5'-GTAC-3' motifs in the microRNA (miRNA) promoter of the stress-responsive miRNAs miR398b and miR398c to activate their transcription. During copper deficiency, activates the copper transporters COPT1 and COPT2, and the copper chaperone CCH, directly or indirectly via miRNAs. Required for the expression of the miRNAs miR397, miR408 and miR857. Acts coordinately with HY5 to regulate miR408 and its target genes in response to changes in light and copper conditions. Activates miR857 and its target genes in response to low copper conditions. Involved in cadmium stress response by regulating miR397a, miR398b, miR398c and miR857. Required for iron homeostasis during copper deficiency. The polypeptide is Squamosa promoter-binding-like protein 7 (SPL7) (Arabidopsis thaliana (Mouse-ear cress)).